Reading from the N-terminus, the 256-residue chain is Trypsin alpha (256 aa).

The first 22 residues, methionine 1–glycine 22, serve as a signal peptide directing secretion. The propeptide at leucine 23–arginine 30 is activation peptide. The Peptidase S1 domain occupies isoleucine 31–asparagine 254. An intrachain disulfide couples cysteine 56 to cysteine 72. Active-site charge relay system residues include histidine 71 and aspartate 116. 2 cysteine pairs are disulfide-bonded: cysteine 180-cysteine 197 and cysteine 206-cysteine 230. The active-site Charge relay system is serine 210.

It belongs to the peptidase S1 family. In terms of tissue distribution, synthesized in the midgut of both larvae and adults, primarily in the ventriculus and gastric caeca.

It is found in the secreted. Its subcellular location is the extracellular space. The catalysed reaction is Preferential cleavage: Arg-|-Xaa, Lys-|-Xaa.. The protein is Trypsin alpha (alphaTry) of Drosophila melanogaster (Fruit fly).